Reading from the N-terminus, the 360-residue chain is Chorismate synthase (360 aa).

Arg-47 is a binding site for NADP(+). Residues 124–126 (RSS), 240–241 (NA), Gly-285, 300–304 (KPVAT), and Arg-326 each bind FMN.

This sequence belongs to the chorismate synthase family. Homotetramer. FMNH2 is required as a cofactor.

The enzyme catalyses 5-O-(1-carboxyvinyl)-3-phosphoshikimate = chorismate + phosphate. Its pathway is metabolic intermediate biosynthesis; chorismate biosynthesis; chorismate from D-erythrose 4-phosphate and phosphoenolpyruvate: step 7/7. Its function is as follows. Catalyzes the anti-1,4-elimination of the C-3 phosphate and the C-6 proR hydrogen from 5-enolpyruvylshikimate-3-phosphate (EPSP) to yield chorismate, which is the branch point compound that serves as the starting substrate for the three terminal pathways of aromatic amino acid biosynthesis. This reaction introduces a second double bond into the aromatic ring system. This is Chorismate synthase from Cytophaga hutchinsonii (strain ATCC 33406 / DSM 1761 / CIP 103989 / NBRC 15051 / NCIMB 9469 / D465).